We begin with the raw amino-acid sequence, 496 residues long: Acetyl-coenzyme A carboxylase carboxyl transferase subunit beta, chloroplastic (496 aa).

A CoA carboxyltransferase N-terminal domain is found at 229–496; it reads LWVQCENCYG…FFPLNKNFIK (268 aa). Zn(2+) is bound by residues Cys-233, Cys-236, Cys-252, and Cys-255. A C4-type zinc finger spans residues 233–255; the sequence is CENCYGLNYKKFFRLKLHICEQC.

It belongs to the AccD/PCCB family. In terms of assembly, acetyl-CoA carboxylase is a heterohexamer composed of biotin carboxyl carrier protein, biotin carboxylase and 2 subunits each of ACCase subunit alpha and ACCase plastid-coded subunit beta (accD). Zn(2+) is required as a cofactor.

It is found in the plastid. The protein resides in the chloroplast stroma. The catalysed reaction is N(6)-carboxybiotinyl-L-lysyl-[protein] + acetyl-CoA = N(6)-biotinyl-L-lysyl-[protein] + malonyl-CoA. The protein operates within lipid metabolism; malonyl-CoA biosynthesis; malonyl-CoA from acetyl-CoA: step 1/1. Component of the acetyl coenzyme A carboxylase (ACC) complex. Biotin carboxylase (BC) catalyzes the carboxylation of biotin on its carrier protein (BCCP) and then the CO(2) group is transferred by the transcarboxylase to acetyl-CoA to form malonyl-CoA. The sequence is that of Acetyl-coenzyme A carboxylase carboxyl transferase subunit beta, chloroplastic from Ranunculus macranthus (Large buttercup).